The primary structure comprises 153 residues: Large ribosomal subunit protein uL15 (153 aa).

The segment at 1 to 49 is disordered; it reads MQLHNLYPFPEERKTRRRVGRGSGSGLGCTAGKGHKGQNARAGGGVAPG. The span at 21–31 shows a compositional bias: gly residues; that stretch reads RGSGSGLGCTA.

Belongs to the universal ribosomal protein uL15 family. As to quaternary structure, part of the 50S ribosomal subunit.

Binds to the 23S rRNA. This is Large ribosomal subunit protein uL15 from Desulfovibrio desulfuricans (strain ATCC 27774 / DSM 6949 / MB).